The sequence spans 252 residues: MLKKRIIPCLDVKDGRVVKGINFVNLTDVGDPVDASKAYYEAGCDELVFLDITATHEERDTTIEMVRRVAEQVFIPFTVGGGIRTVEDMKRMLQAGADKVAVNSSALANPQLLADCAEKFGSQCVVLAVDAKKEADGSWHVYLAGGRKDSGRELLDWVQEAVGLGAGEILLTSMDKDGTKSGFDLPMLEAVSQVVSVPIIASGGAGSSQHILEVFEKTAATGALAASIFHYGQVSISETKKAMQAAGLEVRI.

Active-site residues include Asp11 and Asp130.

The protein belongs to the HisA/HisF family. As to quaternary structure, heterodimer of HisH and HisF.

It is found in the cytoplasm. The enzyme catalyses 5-[(5-phospho-1-deoxy-D-ribulos-1-ylimino)methylamino]-1-(5-phospho-beta-D-ribosyl)imidazole-4-carboxamide + L-glutamine = D-erythro-1-(imidazol-4-yl)glycerol 3-phosphate + 5-amino-1-(5-phospho-beta-D-ribosyl)imidazole-4-carboxamide + L-glutamate + H(+). The protein operates within amino-acid biosynthesis; L-histidine biosynthesis; L-histidine from 5-phospho-alpha-D-ribose 1-diphosphate: step 5/9. IGPS catalyzes the conversion of PRFAR and glutamine to IGP, AICAR and glutamate. The HisF subunit catalyzes the cyclization activity that produces IGP and AICAR from PRFAR using the ammonia provided by the HisH subunit. This Streptococcus gordonii (strain Challis / ATCC 35105 / BCRC 15272 / CH1 / DL1 / V288) protein is Imidazole glycerol phosphate synthase subunit HisF.